The primary structure comprises 98 residues: Large ribosomal subunit protein uL23 (98 aa).

This sequence belongs to the universal ribosomal protein uL23 family. As to quaternary structure, part of the 50S ribosomal subunit. Contacts protein L29, and trigger factor when it is bound to the ribosome.

In terms of biological role, one of the early assembly proteins it binds 23S rRNA. One of the proteins that surrounds the polypeptide exit tunnel on the outside of the ribosome. Forms the main docking site for trigger factor binding to the ribosome. The sequence is that of Large ribosomal subunit protein uL23 from Frankia casuarinae (strain DSM 45818 / CECT 9043 / HFP020203 / CcI3).